We begin with the raw amino-acid sequence, 38 residues long: Photosystem II reaction center protein L (38 aa).

A helical transmembrane segment spans residues 17–37 (SLYWGLLLIFVLAILFSSYIF).

This sequence belongs to the PsbL family. In terms of assembly, PSII is composed of 1 copy each of membrane proteins PsbA, PsbB, PsbC, PsbD, PsbE, PsbF, PsbH, PsbI, PsbJ, PsbK, PsbL, PsbM, PsbT, PsbX, PsbY, PsbZ, Psb30/Ycf12, at least 3 peripheral proteins of the oxygen-evolving complex and a large number of cofactors. It forms dimeric complexes.

The protein resides in the plastid. The protein localises to the chloroplast thylakoid membrane. Its function is as follows. One of the components of the core complex of photosystem II (PSII). PSII is a light-driven water:plastoquinone oxidoreductase that uses light energy to abstract electrons from H(2)O, generating O(2) and a proton gradient subsequently used for ATP formation. It consists of a core antenna complex that captures photons, and an electron transfer chain that converts photonic excitation into a charge separation. This subunit is found at the monomer-monomer interface and is required for correct PSII assembly and/or dimerization. This chain is Photosystem II reaction center protein L, found in Nephroselmis olivacea (Green alga).